The sequence spans 437 residues: GTPase Obg (437 aa).

The region spanning 2–160 is the Obg domain; that stretch reads SMFLDTAKIS…RQLELELKIL (159 aa). The 178-residue stretch at 161-338 folds into the OBG-type G domain; sequence ADVGLVGFPS…LLEATAELLA (178 aa). GTP contacts are provided by residues 167–174, 192–196, 214–217, 284–287, and 319–321; these read GFPSVGKS, FTTIV, DLPG, NKMD, and SSL. The Mg(2+) site is built by serine 174 and threonine 194. One can recognise an OCT domain in the interval 359-437; it reads GFAEAEKEFE…IGKFEFEFVD (79 aa).

The protein belongs to the TRAFAC class OBG-HflX-like GTPase superfamily. OBG GTPase family. In terms of assembly, monomer. Mg(2+) is required as a cofactor.

Its subcellular location is the cytoplasm. In terms of biological role, an essential GTPase which binds GTP, GDP and possibly (p)ppGpp with moderate affinity, with high nucleotide exchange rates and a fairly low GTP hydrolysis rate. Plays a role in control of the cell cycle, stress response, ribosome biogenesis and in those bacteria that undergo differentiation, in morphogenesis control. The protein is GTPase Obg of Streptococcus pyogenes serotype M3 (strain ATCC BAA-595 / MGAS315).